A 367-amino-acid polypeptide reads, in one-letter code: Tetraacyldisaccharide 4'-kinase (367 aa).

ATP is bound at residue valine 68–threonine 75.

The protein belongs to the LpxK family.

The enzyme catalyses a lipid A disaccharide + ATP = a lipid IVA + ADP + H(+). It functions in the pathway glycolipid biosynthesis; lipid IV(A) biosynthesis; lipid IV(A) from (3R)-3-hydroxytetradecanoyl-[acyl-carrier-protein] and UDP-N-acetyl-alpha-D-glucosamine: step 6/6. In terms of biological role, transfers the gamma-phosphate of ATP to the 4'-position of a tetraacyldisaccharide 1-phosphate intermediate (termed DS-1-P) to form tetraacyldisaccharide 1,4'-bis-phosphate (lipid IVA). This Chlamydia abortus (strain DSM 27085 / S26/3) (Chlamydophila abortus) protein is Tetraacyldisaccharide 4'-kinase.